A 116-amino-acid polypeptide reads, in one-letter code: uncharacterized protein (116 aa).

An N-terminal signal peptide occupies residues 1–21 (MAPSTAMLIMGLLKLPRLRLA).

This is an uncharacterized protein from Saccharomyces cerevisiae (strain ATCC 204508 / S288c) (Baker's yeast).